Reading from the N-terminus, the 301-residue chain is Phosphoribosylaminoimidazole-succinocarboxamide synthase (301 aa).

Belongs to the SAICAR synthetase family.

The catalysed reaction is 5-amino-1-(5-phospho-D-ribosyl)imidazole-4-carboxylate + L-aspartate + ATP = (2S)-2-[5-amino-1-(5-phospho-beta-D-ribosyl)imidazole-4-carboxamido]succinate + ADP + phosphate + 2 H(+). The protein operates within purine metabolism; IMP biosynthesis via de novo pathway; 5-amino-1-(5-phospho-D-ribosyl)imidazole-4-carboxamide from 5-amino-1-(5-phospho-D-ribosyl)imidazole-4-carboxylate: step 1/2. This chain is Phosphoribosylaminoimidazole-succinocarboxamide synthase, found in Mycolicibacterium vanbaalenii (strain DSM 7251 / JCM 13017 / BCRC 16820 / KCTC 9966 / NRRL B-24157 / PYR-1) (Mycobacterium vanbaalenii).